Here is a 155-residue protein sequence, read N- to C-terminus: Probable jacalin-related lectin 26 (155 aa).

Helical transmembrane passes span 26 to 48 (AYLY…IAMI) and 127 to 149 (VSFV…VLFL). Positions 47–155 (MIRAGSVGKK…VLFLMKFKRS (109 aa)) constitute a Jacalin-type lectin domain.

The protein belongs to the jacalin lectin family.

It is found in the membrane. This chain is Probable jacalin-related lectin 26 (JAL26), found in Arabidopsis thaliana (Mouse-ear cress).